The primary structure comprises 286 residues: Bifunctional protein FolD 2 (286 aa).

Residues 165 to 167, T192, and V233 each bind NADP(+); that span reads GRG.

This sequence belongs to the tetrahydrofolate dehydrogenase/cyclohydrolase family. Homodimer.

It catalyses the reaction (6R)-5,10-methylene-5,6,7,8-tetrahydrofolate + NADP(+) = (6R)-5,10-methenyltetrahydrofolate + NADPH. The enzyme catalyses (6R)-5,10-methenyltetrahydrofolate + H2O = (6R)-10-formyltetrahydrofolate + H(+). The protein operates within one-carbon metabolism; tetrahydrofolate interconversion. Functionally, catalyzes the oxidation of 5,10-methylenetetrahydrofolate to 5,10-methenyltetrahydrofolate and then the hydrolysis of 5,10-methenyltetrahydrofolate to 10-formyltetrahydrofolate. The protein is Bifunctional protein FolD 2 of Rhodococcus jostii (strain RHA1).